The chain runs to 437 residues: UDP-N-acetylmuramoylalanine--D-glutamate ligase (437 aa).

Residue Gly115–Thr121 coordinates ATP.

This sequence belongs to the MurCDEF family.

It localises to the cytoplasm. It carries out the reaction UDP-N-acetyl-alpha-D-muramoyl-L-alanine + D-glutamate + ATP = UDP-N-acetyl-alpha-D-muramoyl-L-alanyl-D-glutamate + ADP + phosphate + H(+). Its pathway is cell wall biogenesis; peptidoglycan biosynthesis. Cell wall formation. Catalyzes the addition of glutamate to the nucleotide precursor UDP-N-acetylmuramoyl-L-alanine (UMA). In Vibrio campbellii (strain ATCC BAA-1116), this protein is UDP-N-acetylmuramoylalanine--D-glutamate ligase.